Here is a 251-residue protein sequence, read N- to C-terminus: Ubiquinone/menaquinone biosynthesis C-methyltransferase UbiE (251 aa).

S-adenosyl-L-methionine contacts are provided by residues T74, D95, 123 to 124 (NA), and S140.

This sequence belongs to the class I-like SAM-binding methyltransferase superfamily. MenG/UbiE family.

It catalyses the reaction a 2-demethylmenaquinol + S-adenosyl-L-methionine = a menaquinol + S-adenosyl-L-homocysteine + H(+). The enzyme catalyses a 2-methoxy-6-(all-trans-polyprenyl)benzene-1,4-diol + S-adenosyl-L-methionine = a 5-methoxy-2-methyl-3-(all-trans-polyprenyl)benzene-1,4-diol + S-adenosyl-L-homocysteine + H(+). Its pathway is quinol/quinone metabolism; menaquinone biosynthesis; menaquinol from 1,4-dihydroxy-2-naphthoate: step 2/2. It participates in cofactor biosynthesis; ubiquinone biosynthesis. Methyltransferase required for the conversion of demethylmenaquinol (DMKH2) to menaquinol (MKH2) and the conversion of 2-polyprenyl-6-methoxy-1,4-benzoquinol (DDMQH2) to 2-polyprenyl-3-methyl-6-methoxy-1,4-benzoquinol (DMQH2). This is Ubiquinone/menaquinone biosynthesis C-methyltransferase UbiE from Yersinia pestis bv. Antiqua (strain Angola).